Here is a 402-residue protein sequence, read N- to C-terminus: Protein prenyltransferase alpha subunit repeat-containing protein 1 (402 aa).

Residue Ala-2 is modified to N-acetylalanine. PFTA repeat units follow at residues 87–120 (LIDV…LNPI), 122–155 (DLHL…QETS), 180–213 (EMEV…KLDV), and 219–252 (ELSS…SQTV). Positions 263-282 (LRSEPALVPPKDEEAAVSTE) are disordered. One copy of the PFTA 5 repeat lies at 295–328 (EVEFSTDLIDSYPGHETLWCHRRHIFYLQHHLNA).

It belongs to the protein prenyltransferase subunit alpha family.

The sequence is that of Protein prenyltransferase alpha subunit repeat-containing protein 1 (PTAR1) from Homo sapiens (Human).